We begin with the raw amino-acid sequence, 310 residues long: tRNA-cytidine(32) 2-sulfurtransferase (310 aa).

The PP-loop motif motif lies at serine 58–serine 63. Residues cysteine 133, cysteine 136, and cysteine 224 each coordinate [4Fe-4S] cluster.

The protein belongs to the TtcA family. Homodimer. Mg(2+) is required as a cofactor. It depends on [4Fe-4S] cluster as a cofactor.

It is found in the cytoplasm. It catalyses the reaction cytidine(32) in tRNA + S-sulfanyl-L-cysteinyl-[cysteine desulfurase] + AH2 + ATP = 2-thiocytidine(32) in tRNA + L-cysteinyl-[cysteine desulfurase] + A + AMP + diphosphate + H(+). It functions in the pathway tRNA modification. Functionally, catalyzes the ATP-dependent 2-thiolation of cytidine in position 32 of tRNA, to form 2-thiocytidine (s(2)C32). The sulfur atoms are provided by the cysteine/cysteine desulfurase (IscS) system. The polypeptide is tRNA-cytidine(32) 2-sulfurtransferase (Paracidovorax citrulli (strain AAC00-1) (Acidovorax citrulli)).